Reading from the N-terminus, the 265-residue chain is uncharacterized protein (265 aa).

Residues 3–23 (KKTWVYIIIAIIIILLLVWYF) form a helical; Signal-anchor for type II membrane protein membrane-spanning segment. N-linked (GlcNAc...) asparagine; by host glycans are attached at residues Asn-37 and Asn-125. The stretch at 37–94 (NQTYNMLQQQISSLNQQILFLKQQISNLHVPAPTSTVNSLRQTVSDINQQVSTINNQI) forms a coiled coil. Residues 158–257 (NVADNELNVL…KNSLGSAVRN (100 aa)) are a coiled coil.

The protein resides in the host membrane. It is found in the virion. This is an uncharacterized protein from Acanthamoeba polyphaga (Amoeba).